The chain runs to 472 residues: Adenosylhomocysteinase (472 aa).

Substrate contacts are provided by Thr-64, Asp-138, and Glu-198. 199-201 is a binding site for NAD(+); it reads TTT. Residues Lys-228 and Asp-232 each coordinate substrate. Residues Asn-233, 262–267, Glu-285, Asn-320, 341–343, and Asn-386 contribute to the NAD(+) site; these read GFGDVG and IGH.

The protein belongs to the adenosylhomocysteinase family. Requires NAD(+) as cofactor.

Its subcellular location is the cytoplasm. The enzyme catalyses S-adenosyl-L-homocysteine + H2O = L-homocysteine + adenosine. It functions in the pathway amino-acid biosynthesis; L-homocysteine biosynthesis; L-homocysteine from S-adenosyl-L-homocysteine: step 1/1. Functionally, may play a key role in the regulation of the intracellular concentration of adenosylhomocysteine. This chain is Adenosylhomocysteinase, found in Prochlorococcus marinus (strain MIT 9301).